The following is a 577-amino-acid chain: Arginine--tRNA ligase (577 aa).

The short motif at Pro122–His132 is the 'HIGH' region element.

It belongs to the class-I aminoacyl-tRNA synthetase family. Monomer.

It is found in the cytoplasm. The catalysed reaction is tRNA(Arg) + L-arginine + ATP = L-arginyl-tRNA(Arg) + AMP + diphosphate. The sequence is that of Arginine--tRNA ligase from Escherichia coli (strain K12 / MC4100 / BW2952).